A 738-amino-acid chain; its full sequence is Exocyst complex component 3 (738 aa).

Positions 28 to 91 form a coiled coil; sequence LEKVEQYRHR…DEVERLLRGV (64 aa).

This sequence belongs to the SEC6 family. In terms of assembly, the exocyst complex is composed of Sec3/Exoc1, Sec5/Exoc2, Sec6/Exoc3, Sec8/Exoc4, Sec10/Exoc5, Sec15/Exoc6, Exo70/Exoc7 and Exo84/Exoc8.

Its function is as follows. Component of the exocyst complex involved in the docking of exocytic vesicles with fusion sites on the plasma membrane. This chain is Exocyst complex component 3, found in Drosophila melanogaster (Fruit fly).